The sequence spans 179 residues: ADP-ribosylation factor-like protein 5A (179 aa).

Glycine 2 carries N-myristoyl glycine lipidation. Residues 23–30 (GLDNAGKT), 66–70 (DIGGQ), 125–128 (NKQD), and alanine 159 contribute to the GTP site.

Belongs to the small GTPase superfamily. Arf family.

Its function is as follows. Lacks ADP-ribosylation enhancing activity. The polypeptide is ADP-ribosylation factor-like protein 5A (Arl5a) (Mus musculus (Mouse)).